The chain runs to 695 residues: MKERLYPIEKIRNIGIVAHIDAGKTTTTERILFYTGTKHKLGNVDEGTTETDWMEQEKERGITITSAATSAFWKDHRINIIDTPGHVDFTVEVERSLRVLDGAIAVFDAQVGVEPQSETVWRQADRYRVPRIAFMNKMDKIGANFFNAIQTMKDKLGANPIALQVPIGSEAEFEGVVDLLTMEALYWTDENGQIIEKRSIPSNLIDFCESKREDLIAAVAEVDENIMELYIEEEEIPVDKLKEAIRTSTIQSKIVPVLCGSAFKNKGVQPLLDAVIDYLPSPLDMPPVKAFDGTTGEFVKDILPFEDGDFFALAFKIMADPFIGKLTFARVYSGTLNKGSYVVNTTKNKTERVSRLVFLHADKREEVDYIRAGDIVGLIGLKDTSTGDTLSDKECNLVLEKLEFPEPVISVSIEPETKDDEAKLGKALNALTEEDPSLRSYVDHDTGETILSGMGELHLEIIIDRIKREYKVNVKVGQPRVAYKETIKLPSEAEGKYIRQTGGRGQYGHVKLRVEPLPLNSEKEFEFVDKIVGGVIPREYIPAIENGVKESMQDGVLLGYPMVAIRVEVFDGSYHEVDSSEMAFKIAASMAFKDAIKKAKPVLLEPVMKVDVTTPEEYMGDIIADLSSRRGRIESFENVGGTNTRVVHAQVPLSELFGYATIMRSLSQGRATSSIQFSHYEEVPEQVTQKLLSRE.

Residues 9-283 enclose the tr-type G domain; it reads EKIRNIGIVA…AVIDYLPSPL (275 aa). GTP contacts are provided by residues 18 to 25, 82 to 86, and 136 to 139; these read AHIDAGKT, DTPGH, and NKMD.

This sequence belongs to the TRAFAC class translation factor GTPase superfamily. Classic translation factor GTPase family. EF-G/EF-2 subfamily.

The protein localises to the cytoplasm. Its function is as follows. Catalyzes the GTP-dependent ribosomal translocation step during translation elongation. During this step, the ribosome changes from the pre-translocational (PRE) to the post-translocational (POST) state as the newly formed A-site-bound peptidyl-tRNA and P-site-bound deacylated tRNA move to the P and E sites, respectively. Catalyzes the coordinated movement of the two tRNA molecules, the mRNA and conformational changes in the ribosome. The protein is Elongation factor G of Petrotoga mobilis (strain DSM 10674 / SJ95).